Consider the following 177-residue polypeptide: Large ribosomal subunit protein uL6 (177 aa).

The protein belongs to the universal ribosomal protein uL6 family. Part of the 50S ribosomal subunit.

Its function is as follows. This protein binds to the 23S rRNA, and is important in its secondary structure. It is located near the subunit interface in the base of the L7/L12 stalk, and near the tRNA binding site of the peptidyltransferase center. In Erwinia tasmaniensis (strain DSM 17950 / CFBP 7177 / CIP 109463 / NCPPB 4357 / Et1/99), this protein is Large ribosomal subunit protein uL6.